The primary structure comprises 533 residues: UDP-glucuronosyltransferase 1-2 (533 aa).

Residues Met-1–Gly-27 form the signal peptide. N-linked (GlcNAc...) asparagine glycans are attached at residues Asn-141, Asn-295, and Asn-433. The helical transmembrane segment at Val-491–Ala-511 threads the bilayer.

It belongs to the UDP-glycosyltransferase family. As to expression, expressed in kidney.

It is found in the microsome. It localises to the endoplasmic reticulum membrane. It carries out the reaction glucuronate acceptor + UDP-alpha-D-glucuronate = acceptor beta-D-glucuronoside + UDP + H(+). In terms of biological role, UDPGT is of major importance in the conjugation and subsequent elimination of potentially toxic xenobiotics and endogenous compounds. The chain is UDP-glucuronosyltransferase 1-2 (Ugt1a2) from Mus musculus (Mouse).